Here is a 487-residue protein sequence, read N- to C-terminus: Glycogen synthase (487 aa).

Lysine 20 is an ADP-alpha-D-glucose binding site.

The protein belongs to the glycosyltransferase 1 family. Bacterial/plant glycogen synthase subfamily.

It carries out the reaction [(1-&gt;4)-alpha-D-glucosyl](n) + ADP-alpha-D-glucose = [(1-&gt;4)-alpha-D-glucosyl](n+1) + ADP + H(+). It functions in the pathway glycan biosynthesis; glycogen biosynthesis. Its function is as follows. Synthesizes alpha-1,4-glucan chains using ADP-glucose. This is Glycogen synthase from Aliivibrio fischeri (strain ATCC 700601 / ES114) (Vibrio fischeri).